We begin with the raw amino-acid sequence, 343 residues long: S-adenosylmethionine:tRNA ribosyltransferase-isomerase (343 aa).

This sequence belongs to the QueA family. Monomer.

The protein localises to the cytoplasm. The enzyme catalyses 7-aminomethyl-7-carbaguanosine(34) in tRNA + S-adenosyl-L-methionine = epoxyqueuosine(34) in tRNA + adenine + L-methionine + 2 H(+). Its pathway is tRNA modification; tRNA-queuosine biosynthesis. In terms of biological role, transfers and isomerizes the ribose moiety from AdoMet to the 7-aminomethyl group of 7-deazaguanine (preQ1-tRNA) to give epoxyqueuosine (oQ-tRNA). This chain is S-adenosylmethionine:tRNA ribosyltransferase-isomerase, found in Hydrogenobaculum sp. (strain Y04AAS1).